A 779-amino-acid polypeptide reads, in one-letter code: Phosphoribosylformylglycinamidine synthase subunit PurL (779 aa).

His52 is a catalytic residue. The ATP site is built by Tyr55 and Lys94. Glu96 provides a ligand contact to Mg(2+). Substrate contacts are provided by residues 97–100 (SHNH) and Arg119. Residue His98 is the Proton acceptor of the active site. Asp120 contacts Mg(2+). Gln243 provides a ligand contact to substrate. Asp271 serves as a coordination point for Mg(2+). 315 to 317 (ESQ) serves as a coordination point for substrate. The ATP site is built by Asn523 and Gly560. Mg(2+) is bound at residue Asn561. Substrate is bound at residue Ser563.

The protein belongs to the FGAMS family. As to quaternary structure, monomer. Part of the FGAM synthase complex composed of 1 PurL, 1 PurQ and 2 PurS subunits.

The protein resides in the cytoplasm. The catalysed reaction is N(2)-formyl-N(1)-(5-phospho-beta-D-ribosyl)glycinamide + L-glutamine + ATP + H2O = 2-formamido-N(1)-(5-O-phospho-beta-D-ribosyl)acetamidine + L-glutamate + ADP + phosphate + H(+). It functions in the pathway purine metabolism; IMP biosynthesis via de novo pathway; 5-amino-1-(5-phospho-D-ribosyl)imidazole from N(2)-formyl-N(1)-(5-phospho-D-ribosyl)glycinamide: step 1/2. In terms of biological role, part of the phosphoribosylformylglycinamidine synthase complex involved in the purines biosynthetic pathway. Catalyzes the ATP-dependent conversion of formylglycinamide ribonucleotide (FGAR) and glutamine to yield formylglycinamidine ribonucleotide (FGAM) and glutamate. The FGAM synthase complex is composed of three subunits. PurQ produces an ammonia molecule by converting glutamine to glutamate. PurL transfers the ammonia molecule to FGAR to form FGAM in an ATP-dependent manner. PurS interacts with PurQ and PurL and is thought to assist in the transfer of the ammonia molecule from PurQ to PurL. This chain is Phosphoribosylformylglycinamidine synthase subunit PurL, found in Prochlorococcus marinus (strain MIT 9215).